Reading from the N-terminus, the 287-residue chain is Toxin zeta (287 aa).

Residue 40–47 (GQPGSGKT) coordinates ATP. Position 66 (asparagine 66) interacts with substrate. Aspartate 67 functions as the Proton acceptor in the catalytic mechanism. Residues glutamate 100, threonine 118, arginine 120, and threonine 128 each contribute to the substrate site. Positions 267 to 287 (KLESLQPPTPPIPKTPKLPGI) are disordered. Positions 273-287 (PPTPPIPKTPKLPGI) are enriched in pro residues.

This sequence belongs to the zeta toxin family. In the presence of the epsilon antitoxin forms an inactive PezA(2)PezT(2) heterotetramer. The heterotetramer is still able to bind the UNAG substrate.

The catalysed reaction is UDP-N-acetyl-alpha-D-glucosamine + ATP = UDP-N-acetyl-alpha-D-glucosamine 3'-phosphate + ADP + H(+). Functionally, toxic component of a type II toxin-antitoxin (TA) system. Phosphorylates UDP-N-acetyl-D-glucosamine (UNAG) on the 3'-hydroxyl group of the N-acetyl-D-glucosamine moiety, yielding UNAG-3P. UNAG-3P inhibits MurA, the first committed step in cell wall synthesis, which is then blocked. Phosphorylation is inhibited by cognate epsilon antitoxin. Part of a postsegregational killing (PSK) system involved in the killing of plasmid-free cells. The zeta toxin induces programmed cell death. The protein is Toxin zeta of Streptococcus pyogenes.